Consider the following 724-residue polypeptide: Eukaryotic elongation factor 2 kinase (724 aa).

Ala2 is modified (N-acetylalanine). A disordered region spans residues 11-35; that stretch reads EGVDGGGSSGAGRHGDSDTDSDDDE. The segment covering 13 to 22 has biased composition (gly residues); the sequence is VDGGGSSGAG. Residues Ser18, Ser27, Ser70, and Ser73 each carry the phosphoserine modification. The residue at position 77 (Ser77) is a Phosphoserine; by autocatalysis and TRPM7. A calmodulin-binding region spans residues 80-93; sequence FKEAWKHAIEKAKH. In terms of domain architecture, Alpha-type protein kinase spans 115–325; the sequence is RYNAVTGEWL…ICQSMGLAPF (211 aa). A Phosphoserine modification is found at Ser242. 295 to 301 is an ATP binding site; it reads GDGNLGV. The residue at position 347 (Thr347) is a Phosphothreonine. Residue Thr352 is modified to Phosphothreonine; by autocatalysis. The disordered stretch occupies residues 353 to 476; the sequence is EEKCGSPRIR…PESDEDSLGS (124 aa). Phosphoserine; by MAPK13 and CDK1 is present on Ser358. The segment covering 364-376 has biased composition (low complexity); it reads LSGSRPPLLLRLS. Phosphoserine occurs at positions 365 and 391. A compositionally biased stretch (polar residues) spans 385–403; that stretch reads SDVTFDSLPSSPSSATPHS. Phosphoserine; by AMPK is present on Ser397. Basic and acidic residues-rich tracts occupy residues 421–435 and 444–468; these read GPRD…RDSE and SEKR…RRPE. Residues Ser434, Ser444, Ser469, Ser473, and Ser476 each carry the phosphoserine modification. Ser499 carries the post-translational modification Phosphoserine; by PKA.

This sequence belongs to the protein kinase superfamily. Alpha-type protein kinase family. In terms of assembly, monomer or homodimer. Interacts with Calmodulin/CALM1; this interaction is strictly required for phosphorylation activity. In terms of processing, the N-terminus is blocked. Post-translationally, autophosphorylated at multiple residues, Thr-347 being the major site. Phosphorylated by AMP-activated protein kinase AMPK at Ser-397 leading to EEF2K activation and protein synthesis inhibition. Phosphorylated by TRPM7 at Ser-77 resulting in improved protein stability, higher EE2F phosphorylated and subsequently reduced rate of protein synthesis. Phosphorylation by other kinases such as CDK1 and MAPK13 at Ser-358 or RPS6KA1 and RPS6KB1 at Ser-365 instead decrease EEF2K activity and promote protein synthesis. Widely expressed, with high levels in reticulocytes and skeletal muscle.

It carries out the reaction [translation elongation factor 2] + ATP = [translation elongation factor 2]-phosphate + ADP + H(+). Its activity is regulated as follows. Undergoes calcium/calmodulin-dependent intramolecular autophosphorylation, and this results in it becoming partially calcium/calmodulin-independent. In terms of biological role, threonine kinase that regulates protein synthesis by controlling the rate of peptide chain elongation. Upon activation by a variety of upstream kinases including AMPK or TRPM7, phosphorylates the elongation factor EEF2 at a single site, renders it unable to bind ribosomes and thus inactive. In turn, the rate of protein synthesis is reduced. The sequence is that of Eukaryotic elongation factor 2 kinase from Rattus norvegicus (Rat).